The chain runs to 68 residues: MKLEEIKKFVAELRGLSQEELAKKENELKKELFDLRFQAAAGQLDQTARLNEVKKQIARVKTVQSEMK.

It belongs to the universal ribosomal protein uL29 family.

This chain is Large ribosomal subunit protein uL29, found in Streptococcus uberis (strain ATCC BAA-854 / 0140J).